Consider the following 143-residue polypeptide: Ribulose bisphosphate carboxylase large chain (143 aa).

The propeptide occupies 1-2 (MS). An N-acetylproline modification is found at Pro-3. Lys-14 carries the N6,N6,N6-trimethyllysine modification. Xaa-123 provides a ligand contact to substrate.

This sequence belongs to the RuBisCO large chain family. Type I subfamily. Heterohexadecamer of 8 large chains and 8 small chains.

Its subcellular location is the plastid. The protein localises to the chloroplast. The catalysed reaction is 2 (2R)-3-phosphoglycerate + 2 H(+) = D-ribulose 1,5-bisphosphate + CO2 + H2O. It catalyses the reaction D-ribulose 1,5-bisphosphate + O2 = 2-phosphoglycolate + (2R)-3-phosphoglycerate + 2 H(+). In terms of biological role, ruBisCO catalyzes two reactions: the carboxylation of D-ribulose 1,5-bisphosphate, the primary event in carbon dioxide fixation, as well as the oxidative fragmentation of the pentose substrate in the photorespiration process. Both reactions occur simultaneously and in competition at the same active site. The protein is Ribulose bisphosphate carboxylase large chain (rbcL) of Nemopanthus mucronatus (Catberry).